We begin with the raw amino-acid sequence, 260 residues long: Ubiquinone/menaquinone biosynthesis C-methyltransferase UbiE (260 aa).

S-adenosyl-L-methionine is bound by residues Thr-83, Asp-104, and 132 to 133; that span reads NA.

This sequence belongs to the class I-like SAM-binding methyltransferase superfamily. MenG/UbiE family.

The enzyme catalyses a 2-demethylmenaquinol + S-adenosyl-L-methionine = a menaquinol + S-adenosyl-L-homocysteine + H(+). It catalyses the reaction a 2-methoxy-6-(all-trans-polyprenyl)benzene-1,4-diol + S-adenosyl-L-methionine = a 5-methoxy-2-methyl-3-(all-trans-polyprenyl)benzene-1,4-diol + S-adenosyl-L-homocysteine + H(+). It participates in quinol/quinone metabolism; menaquinone biosynthesis; menaquinol from 1,4-dihydroxy-2-naphthoate: step 2/2. Its pathway is cofactor biosynthesis; ubiquinone biosynthesis. Functionally, methyltransferase required for the conversion of demethylmenaquinol (DMKH2) to menaquinol (MKH2) and the conversion of 2-polyprenyl-6-methoxy-1,4-benzoquinol (DDMQH2) to 2-polyprenyl-3-methyl-6-methoxy-1,4-benzoquinol (DMQH2). In Bartonella quintana (strain Toulouse) (Rochalimaea quintana), this protein is Ubiquinone/menaquinone biosynthesis C-methyltransferase UbiE.